Consider the following 139-residue polypeptide: MVKKLLTILSIAATAGSLSIGTASAQDAKAGEAVFKQCMTCHRADKNMVGPALGGVVGRKAGTAAGFTYSPLNHNSGEAGLVWTADNIINYLNDPNAFLKKFLTDKGKADQAVGVTKMTFKLANEQQRKDVVAYLATLK.

Positions 1–25 (MVKKLLTILSIAATAGSLSIGTASA) are cleaved as a signal peptide. Pyrrolidone carboxylic acid is present on Q26. Heme c-binding residues include C38, C41, H42, and M118.

It belongs to the cytochrome c family. Post-translationally, binds 1 heme c group covalently per subunit.

In terms of biological role, cytochrome c2 is found mainly in purple, non-sulfur, photosynthetic bacteria where it functions as the electron donor to the oxidized bacteriochlorophyll in the photophosphorylation pathway. However, it may also have a role in the respiratory chain and is found in some non-photosynthetic bacteria. The chain is Cytochrome c2 (cycA) from Rhodopseudomonas palustris (strain ATCC BAA-98 / CGA009).